The sequence spans 339 residues: DNA-directed RNA polymerase subunit alpha (339 aa).

The segment at 1 to 233 (MVREKVRIST…DLFIPFLHAE (233 aa)) is alpha N-terminal domain (alpha-NTD). The segment at 267–339 (IALKSIFIDQ…FTINLPKNKF (73 aa)) is alpha C-terminal domain (alpha-CTD).

Belongs to the RNA polymerase alpha chain family. In plastids the minimal PEP RNA polymerase catalytic core is composed of four subunits: alpha, beta, beta', and beta''. When a (nuclear-encoded) sigma factor is associated with the core the holoenzyme is formed, which can initiate transcription.

The protein localises to the plastid. The protein resides in the chloroplast. The catalysed reaction is RNA(n) + a ribonucleoside 5'-triphosphate = RNA(n+1) + diphosphate. Functionally, DNA-dependent RNA polymerase catalyzes the transcription of DNA into RNA using the four ribonucleoside triphosphates as substrates. The polypeptide is DNA-directed RNA polymerase subunit alpha (Populus trichocarpa (Western balsam poplar)).